The following is a 519-amino-acid chain: Ribonuclease Y (519 aa).

A helical membrane pass occupies residues 3–23 (LLSLLLILLGIILGVVVGYIV). Residues 209–269 (TVSVVNLPND…IRREIARTAL (61 aa)) form the KH domain. Residues 335-428 (VLKHSIEVAH…VAAADALSAA (94 aa)) enclose the HD domain.

Belongs to the RNase Y family.

The protein localises to the cell membrane. In terms of biological role, endoribonuclease that initiates mRNA decay. The sequence is that of Ribonuclease Y from Staphylococcus epidermidis (strain ATCC 35984 / DSM 28319 / BCRC 17069 / CCUG 31568 / BM 3577 / RP62A).